A 256-amino-acid polypeptide reads, in one-letter code: Probable galactose dehydrogenase GalD (256 aa).

Residues 20 to 23 (GGGS), 71 to 72 (DL), and Asn-98 contribute to the NAD(+) site. Ser-150 is a binding site for substrate. The active-site Proton acceptor is Tyr-163. NAD(+) contacts are provided by residues 163–167 (YSTAK) and Ile-196.

The protein belongs to the short-chain dehydrogenases/reductases (SDR) family.

In terms of biological role, involved in the degradation of galactose via the DeLey-Doudoroff pathway. Catalyzes the oxidation of galactose in the presence of NAD(+). Uses NAD(+) as a hydrogen acceptor more efficiently than NADP(+). The chain is Probable galactose dehydrogenase GalD (galD) from Rhizobium meliloti (strain 1021) (Ensifer meliloti).